The sequence spans 200 residues: 3-isopropylmalate dehydratase small subunit (200 aa).

It belongs to the LeuD family. LeuD type 1 subfamily. As to quaternary structure, heterodimer of LeuC and LeuD.

It catalyses the reaction (2R,3S)-3-isopropylmalate = (2S)-2-isopropylmalate. Its pathway is amino-acid biosynthesis; L-leucine biosynthesis; L-leucine from 3-methyl-2-oxobutanoate: step 2/4. In terms of biological role, catalyzes the isomerization between 2-isopropylmalate and 3-isopropylmalate, via the formation of 2-isopropylmaleate. The sequence is that of 3-isopropylmalate dehydratase small subunit from Vibrio vulnificus (strain YJ016).